The chain runs to 653 residues: Mediator of RNA polymerase II transcription subunit 17 (653 aa).

Residues 246–271 (SNESDEHIDSTTGHDIPGTSEKLSAS) form a disordered region.

This sequence belongs to the Mediator complex subunit 17 family. Component of the Mediator complex.

It localises to the nucleus. Functionally, component of the Mediator complex, a coactivator involved in the regulated transcription of nearly all RNA polymerase II-dependent genes. Mediator functions as a bridge to convey information from gene-specific regulatory proteins to the basal RNA polymerase II transcription machinery. The Mediator complex, having a compact conformation in its free form, is recruited to promoters by direct interactions with regulatory proteins and serves for the assembly of a functional preinitiation complex with RNA polymerase II and the general transcription factors. The sequence is that of Mediator of RNA polymerase II transcription subunit 17 (MED17) from Arabidopsis thaliana (Mouse-ear cress).